The chain runs to 896 residues: NEDD4-binding protein 1 (896 aa).

A KH-like domain is found at 59–143 (QEAVHSAKEY…IQQFVKLFEN (85 aa)). Ser-226 is modified (phosphoserine). Thr-242 carries the post-translational modification Phosphothreonine. 2 positions are modified to phosphoserine: Ser-258 and Ser-300. 2 disordered regions span residues 403–430 (YPET…PKKT) and 488–507 (ETDG…VNFV). Polar residues predominate over residues 414–430 (VYSSTNELTTDSTPKKT). Position 562 is a phosphoserine (Ser-562). The region spanning 617–769 (LKHIVIDGSN…LGRSGPRLEE (153 aa)) is the RNase NYN domain. The interval 801–821 (GTQAASTSHQPPTRIQGAPSS) is disordered. The segment covering 803 to 813 (QAASTSHQPPT) has biased composition (polar residues). A coCUN region spans residues 849-896 (RSSAETNELREALLKIFPDSEQRLKIDQILVAHPYMKDLNALSAMVLD).

It belongs to the N4BP1 family. In terms of assembly, interacts with NEDD4. Interacts with ITCH (via WW domain 2). In terms of processing, proteolytically cleaved by CASP8 downstream of TLR3 or TLR4, leading to its inactivation. Mainly cleaved at Asp-490 by CASP8. Cleaved by caspase-like protein MALT1 in T-cells following TCR-mediated activation, leading to its inactivation and subsequent viral reactivation during HIV-1 infection. Post-translationally, mono- and polyubiquitinated on the CoCUN region. Monoubiquitinated by NEDD4. Polyubiquitinated, leading to its degradation by the proteasome. Sumoylated with SUMO1, abrogating polyubiquitination and subsequent degradation. Desumoylated by SENP1, leading to accumulation in PML nuclear bodies. As to expression, detected in heart, lung, brain, liver, skeletal muscle, pancreas, kidney, spleen, testis and ovary.

The protein resides in the cytoplasm. The protein localises to the cytosol. It localises to the nucleus. It is found in the nucleolus. Its subcellular location is the PML body. Proteolytic cleavage by CASP8 or MALT1 leads to its inactivation. Its function is as follows. Potent suppressor of cytokine production that acts as a regulator of innate immune signaling and inflammation. Acts as a key negative regulator of select cytokine and chemokine responses elicited by TRIF-independent Toll-like receptors (TLRs), thereby limiting inflammatory cytokine responses to minor insults. In response to more threatening pathogens, cleaved by CASP8 downstream of TLR3 or TLR4, leading to its inactivation, thereby allowing production of inflammatory cytokines. Acts as a restriction factor against some viruses, such as HIV-1: restricts HIV-1 replication by binding to HIV-1 mRNAs and mediating their degradation via its ribonuclease activity. Also acts as an inhibitor of the E3 ubiquitin-protein ligase ITCH: acts by interacting with the second WW domain of ITCH, leading to compete with ITCH's substrates and impairing ubiquitination of substrates. The polypeptide is NEDD4-binding protein 1 (Homo sapiens (Human)).